Consider the following 409-residue polypeptide: Serine/threonine transporter SstT (409 aa).

The next 9 membrane-spanning stretches (helical) occupy residues 15-35 (LSLV…ALLA), 49-69 (FVSA…MASI), 82-102 (PILV…VIAS), 142-162 (ALMN…GVAI), 193-213 (LGIF…ALLG), 218-238 (LAVL…LIVF), 301-321 (GAAI…GIAV), 331-351 (VVAA…LLLI), and 357-377 (LFGI…IIGV).

It belongs to the dicarboxylate/amino acid:cation symporter (DAACS) (TC 2.A.23) family.

Its subcellular location is the cell inner membrane. It carries out the reaction L-serine(in) + Na(+)(in) = L-serine(out) + Na(+)(out). The enzyme catalyses L-threonine(in) + Na(+)(in) = L-threonine(out) + Na(+)(out). In terms of biological role, involved in the import of serine and threonine into the cell, with the concomitant import of sodium (symport system). The polypeptide is Serine/threonine transporter SstT (Pseudomonas fluorescens (strain ATCC BAA-477 / NRRL B-23932 / Pf-5)).